Reading from the N-terminus, the 167-residue chain is Small ribosomal subunit protein uS5 (167 aa).

The S5 DRBM domain maps to 11 to 74 (LQEKLIAVNR…EKARRNMINV (64 aa)).

This sequence belongs to the universal ribosomal protein uS5 family. Part of the 30S ribosomal subunit. Contacts proteins S4 and S8.

In terms of biological role, with S4 and S12 plays an important role in translational accuracy. Functionally, located at the back of the 30S subunit body where it stabilizes the conformation of the head with respect to the body. This is Small ribosomal subunit protein uS5 from Klebsiella pneumoniae subsp. pneumoniae (strain ATCC 700721 / MGH 78578).